Here is a 316-residue protein sequence, read N- to C-terminus: Serine protease 45 (316 aa).

The first 38 residues, 1 to 38, serve as a signal peptide directing secretion; it reads MAASLSRLSAGLAASRPLGLSRSFLLLVLLLLNSGYKG. The region spanning 49 to 290 is the Peptidase S1 domain; the sequence is WWPKNLDLSR…YSRWIKKQIS (242 aa). Cysteines 74 and 90 form a disulfide. Residue histidine 89 is the Charge relay system of the active site. The N-linked (GlcNAc...) asparagine glycan is linked to asparagine 110. Aspartate 137 functions as the Charge relay system in the catalytic mechanism. N-linked (GlcNAc...) asparagine glycans are attached at residues asparagine 162 and asparagine 186. 3 disulfides stabilise this stretch: cysteine 171–cysteine 248, cysteine 206–cysteine 229, and cysteine 238–cysteine 266. The active-site Charge relay system is serine 242.

It belongs to the peptidase S1 family.

Its subcellular location is the secreted. The protein is Serine protease 45 (PRSS45) of Bos taurus (Bovine).